The sequence spans 298 residues: Diphthine methyl ester synthase (298 aa).

Residues leucine 9, aspartate 85, glycine 88, 113–114, leucine 164, leucine 222, and histidine 247 each bind S-adenosyl-L-methionine; that span reads SV.

This sequence belongs to the diphthine synthase family.

The protein localises to the cytoplasm. It catalyses the reaction 2-[(3S)-amino-3-carboxypropyl]-L-histidyl-[translation elongation factor 2] + 4 S-adenosyl-L-methionine = diphthine methyl ester-[translation elongation factor 2] + 4 S-adenosyl-L-homocysteine + 3 H(+). Its pathway is protein modification; peptidyl-diphthamide biosynthesis. In terms of biological role, S-adenosyl-L-methionine-dependent methyltransferase that catalyzes four methylations of the modified target histidine residue in translation elongation factor 2 (EF-2), to form an intermediate called diphthine methyl ester. The four successive methylation reactions represent the second step of diphthamide biosynthesis. The chain is Diphthine methyl ester synthase (DPH5) from Candida glabrata (strain ATCC 2001 / BCRC 20586 / JCM 3761 / NBRC 0622 / NRRL Y-65 / CBS 138) (Yeast).